The following is a 597-amino-acid chain: MGGEAPEARRLDRAMSFGGAGSIPEEALHLVLGYVDDPRDREAVSLVCRRWHRIDALTRKHVTVPFCYAASPAHLLARFPRLESLAVKGKPRAAMYGLIPEDWGAYARPWVAELAAPLECLKALHLRRMVVTDDDLAALVRARGHMLQELKLDKCSGFSTDALRLVARSCRSLRTLFLEECSIADNGTEWLHDLAVNNPVLETLNFHMTELTVVPADLELLAKKCKSLISLKISDCDFSDLIGFFRMAASLQEFAGGAFIEQGELTKYGNVKFPSRLCSLGLTYMGTNEMPIIFPFSALLKKLDLQYTFLTTEDHCQLIAKCPNLLVLAVRNVIGDRGLGVVADTCKKLQRLRVERGDDDPGLQEEQGGVSQVGLTTVAVGCRELEYIAAYVSDITNGALESIGTFCKNLCDFRLVLLDREERITDLPLDNGVRALLRGCTKLRRFALYLRPGGLSDTGLGYIGQYSGIIQYMLLGNVGETDDGLIRFALGCENLRKLELRSCCFSEQALARAIRSMPSLRYVWVQGYKASKTGHDLMLMARPFWNIEFTPPSSENANRMREDGEPCVDSQAQILAYYSLAGKRSDCPRSVVPLYPA.

One can recognise an F-box domain in the interval Ser22–Val64. Jasmonate contacts are provided by Arg92, Arg353, Tyr391, Arg414, and Arg501.

Interacts with TIFY10C/JAZ8 in a coronatine-dependent manner. Interacts with TIFY3/JAZ1, TIFY6A/JAZ3, TIFY6B/JAZ4, TIFY10A/JAZ6, TIFY10B/JAZ7, TIFY11A/JAZ9, TIFY11B/JAZ10, TIFY11C/JAZ11 and TIFY11D/JAZ12 in a coronatine-dependent manner. As to expression, expressed in roots, shoots, leaf sheaths and leaf blades.

Involved in jasmonate (JA) signaling. Required for jasmonate signaling in plant defense responses. Can complement Arabidopsis coi1-1 mutant and restore jasmonate signaling. Component of SCF(COI1) E3 ubiquitin ligase complexes, which may mediate the ubiquitination and subsequent proteasomal degradation of target proteins, including TIFY/JAZ family. This Oryza sativa subsp. japonica (Rice) protein is Coronatine-insensitive protein homolog 1b.